The following is a 1003-amino-acid chain: VAPVVPDLSSDIDTSNFDDLEEDKGEEETFPIPKAFVGNQLPFVGFTYYSNRRYLSSANPNDNRTSSNADKSLQESLQKTIYKLEEQLHNEMQLKDEMEQKCRTSNIKLDKIMKELDEEGNQRRNLESTVSQIEKEKMLLQHRINEYQRKAEQENEKRRNVENEVSTLKDQLEDLKKVSQNSQLANEKLSQLQKQLEEANDLLRTESDTAVRLRKSHTEMSKSISQLESLNRELQERNRILENSKSQTDKDYYQLQAILEAERRDRGHDSEMIGDLQARITSLQEEVKHLKHNLEKVEGERKEAQDMLNHSEKEKNNLEIDLNYKLKSLQQRLEQEVNEHKVTKARLTDKHQSIEEAKSVAMCEMEKKLKEEREAREKAENRVVQIEKQCSMLDVDLKQSQQKLEHLTGNKERMEDEVKNLTLQLEQESNKRLLLQNELKTQAFEADNLKGLEKQMKQEINTLLEAKRLLEFELAQLTKQYRGNEGQMRELQDQLEAEQYFSTLYKTQVKELKEEIEEKNRENLKKIQELQNEKETLATQLDLAETKAESEQLARGLLEEQYFELTQESKKAASRNRQEITDKDHTVSRLEEANSMLTKDIEILRRENEELTEKMKKAEEEYKLEKEEEISNLKAAFEKNINTERTLKTQAVNKLAEIMNRKDFKIDRKKANTQDLRKKEKENRKLQLELNQEREKFNQMVVKHQKELNDMQAQLVEECAHRNELQMQLASKESDIEQLRAKLLDLSDSTSVASFPSADETDGNLPESRIEGWLSVPNRGNIKRYGWKKQYVVVSSKKILFYNDEQDKEQSNPSMVLDIDKLFHVRPVTQGDVYRAETEEIPKIFQILYANEGECRKDVEMEPVQQAEKTNFQNHKGHEFIPTLYHFPANCDACAKPLWHVFKPPPALECRRCHVKCHRDHLDKKEDLICPCKVSYDVTSARDMLLLACSQDEQKKWVTHLVKKIPKNPPSGFVRASPRTLSTRSTANQSFRKVVKNTSGKTR.

A disordered region spans residues 1 to 28; sequence VAPVVPDLSSDIDTSNFDDLEEDKGEEE. Residues 1-58 form the AGC-kinase C-terminal domain; the sequence is VAPVVPDLSSDIDTSNFDDLEEDKGEEETFPIPKAFVGNQLPFVGFTYYSNRRYLSSA. The segment covering 16-28 has biased composition (acidic residues); sequence NFDDLEEDKGEEE. The interaction with FHOD1 stretch occupies residues 17–376; the sequence is FDDLEEDKGE…KKLKEEREAR (360 aa). Residues 71–341 are a coiled coil; the sequence is KSLQESLQKT…RLEQEVNEHK (271 aa). The 78-residue stretch at 128–205 folds into the REM-1 domain; that stretch reads STVSQIEKEK…LEEANDLLRT (78 aa). At K296 the chain carries N6-acetyllysine. The tract at residues 356-595 is SHROOM3 binding; that stretch reads EAKSVAMCEM…TVSRLEEANS (240 aa). The 67-residue stretch at 598 to 664 folds into the RhoBD domain; sequence TKDIEILRRE…LAEIMNRKDF (67 aa). The segment at 647-659 is RHOA binding; that stretch reads LKTQAVNKLAEIM. A coiled-coil region spans residues 660-751; that stretch reads NRKDFKIDRK…KLLDLSDSTS (92 aa). Residues S754 and S757 each carry the phosphoserine modification. An auto-inhibitory region spans residues 764–1003; that stretch reads NLPESRIEGW…VVKNTSGKTR (240 aa). The 200-residue stretch at 767–966 folds into the PH domain; it reads ESRIEGWLSV…WVTHLVKKIP (200 aa). The Phorbol-ester/DAG-type zinc-finger motif lies at 877-930; sequence GHEFIPTLYHFPANCDACAKPLWHVFKPPPALECRRCHVKCHRDHLDKKEDLIC. Positions 968 to 1003 are disordered; it reads NPPSGFVRASPRTLSTRSTANQSFRKVVKNTSGKTR. S977 bears the Phosphoserine mark. The segment covering 979–1003 has biased composition (polar residues); it reads RTLSTRSTANQSFRKVVKNTSGKTR.

This sequence belongs to the protein kinase superfamily. AGC Ser/Thr protein kinase family. As to quaternary structure, homodimer. Interacts with RHOA (activated by GTP), RHOB, RHOC, GEM, MYLC2B, RHOE, PPP1R12A, LIMK1, LIMK2, TSG101, CHORDC1, DAPK3, PFN1, PTEN and JIP3. Interacts with ITGB1BP1 (via N-terminus and PTB domain). Interacts with FHOD1 in a Src-dependent manner. Interacts with SHROOM3. Mg(2+) is required as a cofactor. Autophosphorylated on serine and threonine residues. In terms of processing, cleaved by caspase-3 during apoptosis. This leads to constitutive activation of the kinase and membrane blebbing.

Its subcellular location is the cytoplasm. The protein resides in the cytoskeleton. The protein localises to the microtubule organizing center. It localises to the centrosome. It is found in the centriole. Its subcellular location is the golgi apparatus membrane. The protein resides in the cell projection. The protein localises to the bleb. It localises to the cell membrane. It is found in the lamellipodium. Its subcellular location is the ruffle. It catalyses the reaction L-seryl-[protein] + ATP = O-phospho-L-seryl-[protein] + ADP + H(+). The catalysed reaction is L-threonyl-[protein] + ATP = O-phospho-L-threonyl-[protein] + ADP + H(+). Activated by RHOA binding. Inhibited by Y-27632. In terms of biological role, protein kinase which is a key regulator of actin cytoskeleton and cell polarity. Involved in regulation of smooth muscle contraction, actin cytoskeleton organization, stress fiber and focal adhesion formation, neurite retraction, cell adhesion and motility via phosphorylation of DAPK3, GFAP, LIMK1, LIMK2, MYL9/MLC2, TPPP, PFN1 and PPP1R12A. Phosphorylates FHOD1 and acts synergistically with it to promote SRC-dependent non-apoptotic plasma membrane blebbing. Phosphorylates JIP3 and regulates the recruitment of JNK to JIP3 upon UVB-induced stress. Acts as a suppressor of inflammatory cell migration by regulating PTEN phosphorylation and stability. Acts as a negative regulator of VEGF-induced angiogenic endothelial cell activation. Required for centrosome positioning and centrosome-dependent exit from mitosis. Plays a role in terminal erythroid differentiation. May regulate closure of the eyelids and ventral body wall by inducing the assembly of actomyosin bundles. Promotes keratinocyte terminal differentiation. Involved in osteoblast compaction through the fibronectin fibrillogenesis cell-mediated matrix assembly process, essential for osteoblast mineralization. The sequence is that of Rho-associated protein kinase 1 (ROCK1) from Pan troglodytes (Chimpanzee).